The chain runs to 970 residues: m7GpppN-mRNA hydrolase (970 aa).

The 128-residue stretch at 101-228 (KSIPVRGAAI…IKYYLINSMM (128 aa)) folds into the Nudix hydrolase domain. Ser116 carries the phosphoserine modification. The Nudix box signature appears at 134–155 (GKISKDENDIDCCIREVKEEIG). Glu149 and Glu153 together coordinate Mn(2+). The segment covering 302–314 (QHLKEQSGEHNQQ) has biased composition (basic and acidic residues). Disordered regions lie at residues 302–341 (QHLK…ANNK), 417–465 (AVSQ…PKLK), 501–520 (SSQK…NDSV), and 528–692 (YEDF…LSST). Positions 315–334 (KDQQSSFSSQQQPSIFPSLS) are enriched in low complexity. Ser439 carries the phosphoserine modification. Residues 528–539 (YEDFESSSDEEV) show a composition bias toward acidic residues. Residues 560–576 (SEKDSRRSQKEKPRNDA) are compositionally biased toward basic and acidic residues. Positions 577–590 (SKTNLNASAESNSV) are enriched in polar residues. Low complexity predominate over residues 596–608 (KSSPSTQSKQNSS). Acidic residues predominate over residues 625–637 (DAYEVFESSSDEE). Thr677 carries the phosphothreonine modification. Residues 677–691 (TESNKSINETVGLSS) are compositionally biased toward polar residues. Residues Ser679, Ser682, Ser751, Ser771, Ser773, and Ser778 each carry the phosphoserine modification. The disordered stretch occupies residues 831–867 (LKKNDSTGYPRTEGGPSSEMSTSMKRNDATNNQELDK). A compositionally biased stretch (polar residues) spans 848 to 863 (SEMSTSMKRNDATNNQ).

This sequence belongs to the Nudix hydrolase family. DCP2 subfamily. As to quaternary structure, component of the decapping complex composed of DCP1 and DCP2. Interacts with mRNA, LSM2, LSM4 and LSM8. Interacts with EDC3. Requires Mn(2+) as cofactor.

It localises to the cytoplasm. The protein localises to the P-body. It catalyses the reaction a 5'-end (N(7)-methyl 5'-triphosphoguanosine)-ribonucleoside in mRNA + H2O = N(7)-methyl-GDP + a 5'-end phospho-ribonucleoside in mRNA + 2 H(+). Its function is as follows. Catalytic component of the decapping complex necessary for the degradation of mRNAs, both in normal mRNA turnover and in nonsense-mediated mRNA decay. Removes the 7-methyl guanine cap structure from mRNA molecules, yielding a 5'-phosphorylated mRNA fragment and 7m-GDP. Decapping is the major pathway of mRNA degradation in yeast and occurs through deadenylation, decapping and subsequent 5' to 3' exonucleolytic decay of the transcript body. Blocks autophagy in nutrient-rich conditions by repressing the expression of ATG-related genes through degradation of their transcripts. The polypeptide is m7GpppN-mRNA hydrolase (Saccharomyces cerevisiae (strain ATCC 204508 / S288c) (Baker's yeast)).